Consider the following 206-residue polypeptide: 2,3-bisphosphoglycerate-dependent phosphoglycerate mutase (206 aa).

Residues 9–16 (RHGQSEWN), 22–23 (TG), arginine 61, 88–91 (ERDY), lysine 99, 115–116 (RR), and 159–160 (GN) each bind substrate. Histidine 10 serves as the catalytic Tele-phosphohistidine intermediate. Glutamate 88 (proton donor/acceptor) is an active-site residue.

It belongs to the phosphoglycerate mutase family. BPG-dependent PGAM subfamily. As to quaternary structure, homodimer.

It carries out the reaction (2R)-2-phosphoglycerate = (2R)-3-phosphoglycerate. It participates in carbohydrate degradation; glycolysis; pyruvate from D-glyceraldehyde 3-phosphate: step 3/5. Its function is as follows. Catalyzes the interconversion of 2-phosphoglycerate and 3-phosphoglycerate. This chain is 2,3-bisphosphoglycerate-dependent phosphoglycerate mutase, found in Azorhizobium caulinodans (strain ATCC 43989 / DSM 5975 / JCM 20966 / LMG 6465 / NBRC 14845 / NCIMB 13405 / ORS 571).